Here is a 402-residue protein sequence, read N- to C-terminus: UPF0261 protein BP1203 (402 aa).

It belongs to the UPF0261 family.

This chain is UPF0261 protein BP1203, found in Bordetella pertussis (strain Tohama I / ATCC BAA-589 / NCTC 13251).